The sequence spans 235 residues: Glucosamine-6-phosphate deaminase (235 aa).

Asp62 (proton acceptor; for enolization step) is an active-site residue. Asn128 (for ring-opening step) is an active-site residue. His130 serves as the catalytic Proton acceptor; for ring-opening step. Catalysis depends on Glu135, which acts as the For ring-opening step.

It belongs to the glucosamine/galactosamine-6-phosphate isomerase family. NagB subfamily.

It catalyses the reaction alpha-D-glucosamine 6-phosphate + H2O = beta-D-fructose 6-phosphate + NH4(+). Its pathway is amino-sugar metabolism; N-acetylneuraminate degradation; D-fructose 6-phosphate from N-acetylneuraminate: step 5/5. Its function is as follows. Catalyzes the reversible isomerization-deamination of glucosamine 6-phosphate (GlcN6P) to form fructose 6-phosphate (Fru6P) and ammonium ion. The polypeptide is Glucosamine-6-phosphate deaminase (Lactococcus lactis subsp. cremoris (strain SK11)).